The sequence spans 901 residues: Aconitate hydratase A (901 aa).

[4Fe-4S] cluster-binding residues include cysteine 443, cysteine 509, and cysteine 512.

This sequence belongs to the aconitase/IPM isomerase family. As to quaternary structure, monomer. Requires [4Fe-4S] cluster as cofactor.

The catalysed reaction is citrate = D-threo-isocitrate. The enzyme catalyses (2S,3R)-3-hydroxybutane-1,2,3-tricarboxylate = 2-methyl-cis-aconitate + H2O. The protein operates within carbohydrate metabolism; tricarboxylic acid cycle; isocitrate from oxaloacetate: step 2/2. It functions in the pathway organic acid metabolism; propanoate degradation. Involved in the catabolism of short chain fatty acids (SCFA) via the tricarboxylic acid (TCA)(acetyl degradation route) and probably the 2-methylcitrate cycle I (propionate degradation route). Catalyzes the reversible isomerization of citrate to isocitrate via cis-aconitate. Could catalyze the hydration of 2-methyl-cis-aconitate to yield (2R,3S)-2-methylisocitrate. The apo form of AcnA functions as a RNA-binding regulatory protein. This Staphylococcus aureus (strain MRSA252) protein is Aconitate hydratase A (acnA).